Reading from the N-terminus, the 234-residue chain is MRLVQLSRHSIAFPSPEGALREPNGLLALGGDLSPARLLMAYQRGIFPWFSPGDPILWWSPDPRAVLWPESLHISRSMKRFHKRSPYRVTMNYAFGQVIEGCASDREEGTWITRGVVEAYHRLHELGHAHSIEVWREDELVGGMYGVAQGTLFCGESMFSRMENASKTALLVLCEEFIGHGGKLIDCQVLNDHTASLGACEIPRRDYLNYLNQMRLGRLPNNFWVPRCLFSPQE.

It belongs to the L/F-transferase family.

It localises to the cytoplasm. It catalyses the reaction N-terminal L-lysyl-[protein] + L-leucyl-tRNA(Leu) = N-terminal L-leucyl-L-lysyl-[protein] + tRNA(Leu) + H(+). It carries out the reaction N-terminal L-arginyl-[protein] + L-leucyl-tRNA(Leu) = N-terminal L-leucyl-L-arginyl-[protein] + tRNA(Leu) + H(+). The catalysed reaction is L-phenylalanyl-tRNA(Phe) + an N-terminal L-alpha-aminoacyl-[protein] = an N-terminal L-phenylalanyl-L-alpha-aminoacyl-[protein] + tRNA(Phe). Functions in the N-end rule pathway of protein degradation where it conjugates Leu, Phe and, less efficiently, Met from aminoacyl-tRNAs to the N-termini of proteins containing an N-terminal arginine or lysine. The protein is Leucyl/phenylalanyl-tRNA--protein transferase of Shigella dysenteriae serotype 1 (strain Sd197).